The chain runs to 307 residues: NAD kinase 1 (307 aa).

The active-site Proton acceptor is the D67. Residues 67-68 (DG), 149-150 (NE), R160, D181, and 192-197 (TCYTSS) contribute to the NAD(+) site.

Belongs to the NAD kinase family. Requires a divalent metal cation as cofactor.

The protein localises to the cytoplasm. The enzyme catalyses NAD(+) + ATP = ADP + NADP(+) + H(+). Involved in the regulation of the intracellular balance of NAD and NADP, and is a key enzyme in the biosynthesis of NADP. Catalyzes specifically the phosphorylation on 2'-hydroxyl of the adenosine moiety of NAD to yield NADP. Essential for photoheterotrophic growth. Has a significant function in the oxidative pentose phosphate (OPP) pathway for glucose catabolism under photoheterotrophic conditions. Is also involved in cellular redox homeostasis. In Synechocystis sp. (strain ATCC 27184 / PCC 6803 / Kazusa), this protein is NAD kinase 1.